The primary structure comprises 92 residues: Large ribosomal subunit protein bL25 (92 aa).

The protein belongs to the bacterial ribosomal protein bL25 family. In terms of assembly, part of the 50S ribosomal subunit; part of the 5S rRNA/L5/L18/L25 subcomplex. Contacts the 5S rRNA. Binds to the 5S rRNA independently of L5 and L18.

This is one of the proteins that binds to the 5S RNA in the ribosome where it forms part of the central protuberance. In Photobacterium profundum (strain SS9), this protein is Large ribosomal subunit protein bL25.